The chain runs to 146 residues: Hemoglobin subunit beta (146 aa).

The 145-residue stretch at 2–146 (PFSAHEEKLI…VAAALSVEYY (145 aa)) folds into the Globin domain. 2 residues coordinate heme b: histidine 63 and histidine 92.

This sequence belongs to the globin family. Heterotetramer of two alpha chains and two beta chains. When oxygenated in vitro, exists virtually only in polymeric form. When deoxygenated, forms tetramers, octamers and larger polymers. In terms of tissue distribution, red blood cells.

In terms of biological role, involved in oxygen transport from the lung to the various peripheral tissues. The polypeptide is Hemoglobin subunit beta (Paleosuchus palpebrosus (Cuvier's smooth-fronted caiman)).